The following is a 1411-amino-acid chain: MKMLDLYGYTSIAQSFDKICISIASPESIRAMSYGEIKDISTTNYRTFKVEKGGLFCPKIFGPVNDDECLCGKYRKKRYRGVICEKCGVEVTSSKVRRERMGHIELVSPVAHVWFLKSLPSRIGALLDMPLKLIESILYSGDFVVIDPIATPLSKGEVISESAYNQAKDNYGEDSFIALTGAEAIRELLVRLDLHAINANLRSELESTTSEMKRKKIVKRLRIVENFINSGNKPEWMILTVIPILPPDLRPLVSLENGRPAVSDLNHHYRTIINRNNRLGKLLKLNPPAIMIRNEKRMLQEAVDALFDSTRRSYVSNKAGSVGYKKSLSDMLKGKQGRFRQNLLGKRVDYSGRSVIVVGPNLKLHQCGLPKKMALELFKPFICSKLKMYGIVPTVKLANKMIQNEKPEVWDILDEVIHEHPILLNRAPTLHRLGIQAFDPVLIEGKAIQLHPLVCSAFNADFDGDQMAVHIPLSLEAQLEARILMMSTNNILSPSNGKPIIVPSKDIILGIYYLTLQDYVEPEEILFFGDFSHVEYALHNKDIHICSKIKYKMNYCTDSSDGNGPTYYSKIVETTPGRLMLWQIFPEHKNLTFDLVNQVLTVKEITAIVDLVYRSCGQSETVEFSDKLMSLGFRYASQSGISFGRMDMIIPDTKTMHVDNASEKIKEFAVQYQDGLITKSERYNKVIDEWSKCTDLIAKDMMKAISVYDEESKLNSIYMMAHSGARGSASQMKQLAGMRGLMAKPSGEIIETPIISNFREGLNVFEYFNSTHGARKGLADTALKTANSGYLTRRLVDVAQDCIVVEYDCKTHNGFAMRSVIDGGTVVETLDNIILGRVAAVDIYNPITKELLVNAGELIDEAKVEKIRIAGLDAVKVRSPLTCEAKKGICALCYGRDLAIGDVVSIGEAVGVIAAQSVGEPGTQLTMRTFHVGGTAMRGVETSNLIAMLDAKVKLVNSNVVEDKYGNKIVMSRSCDVVLLDSVGNEKMRHSVPYGARLYVNDGQLVKITEKIADWDPYTMPIITEKTGIIKYMDLIDGVSINEVLDESTGISNRVVVDWKLHLQGANLRPRLVLVNDNGDIITLSSGLEANYFIPIGAVLSVQDGQKVHAGDVITRIPRESIKTRDITGGLPRVIELFEARRPKEHAIVSDIDGYVEFGKDYYRSKRRIFIKPVDDKLSPVEYLVPKGKHTIVNEGDFVHKGDLLMDGDPDPHDILRVLGVEALANYMIAEIQQVYRLQGVRIDNKHIEVILRQMLQKVEIFEPGDTMYLVGENVDVEEVLKTNSNMEKIGKSPAKYIPILQGITRASLDTNSFVSAASFQETTKVLTEAAFSGKEDSLYGLKENVIVGRLIPAGTGFLMNKIKKLSLLNKDDYSMYYNSEYQDLASIEAGHACSVSPSQGVSDTSGAVDY.

Zn(2+) is bound by residues Cys-69, Cys-71, Cys-84, and Cys-87. Residues Asp-461, Asp-463, and Asp-465 each contribute to the Mg(2+) site. Positions 809, 883, 890, and 893 each coordinate Zn(2+).

The protein belongs to the RNA polymerase beta' chain family. The RNAP catalytic core consists of 2 alpha, 1 beta, 1 beta' and 1 omega subunit. When a sigma factor is associated with the core the holoenzyme is formed, which can initiate transcription. It depends on Mg(2+) as a cofactor. The cofactor is Zn(2+).

It carries out the reaction RNA(n) + a ribonucleoside 5'-triphosphate = RNA(n+1) + diphosphate. Its function is as follows. DNA-dependent RNA polymerase catalyzes the transcription of DNA into RNA using the four ribonucleoside triphosphates as substrates. The polypeptide is DNA-directed RNA polymerase subunit beta' (Ehrlichia ruminantium (strain Welgevonden)).